Here is a 512-residue protein sequence, read N- to C-terminus: NAD(P) transhydrogenase subunit alpha (512 aa).

Over 1–400 the chain is Cytoplasmic; sequence MLIGVPRELL…KESKPTDPRV (400 aa). Residues 125–128, valine 175, 195–197, and glycine 225 each bind NAD(+); these read QALD and DSR. The tract at residues 375-394 is disordered; the sequence is SAQPKQETKAAPVAEKKESK. The next 2 membrane-spanning stretches (helical) occupy residues 401–421 and 422–442; these read KYGV…VAPA and AFLS…YVVW. Residues 443–451 are Cytoplasmic-facing; that stretch reads NVSHALHTP. Residues 452–472 traverse the membrane as a helical segment; sequence LMAVTNAISGIIIVGALLQIR. At 473-478 the chain is on the periplasmic side; the sequence is QPTGNL. Residues 479 to 499 traverse the membrane as a helical segment; the sequence is FIDALAFVAILVASINIFGGF. Residues 500–512 lie on the Cytoplasmic side of the membrane; the sequence is RVTQRMLAMFRKG.

The protein belongs to the AlaDH/PNT family. As to quaternary structure, heterodimer of an alpha (PntA) and a beta (PntB) chain.

The protein localises to the cell inner membrane. The catalysed reaction is NAD(+) + NADPH + H(+)(in) = NADH + NADP(+) + H(+)(out). Its function is as follows. The transhydrogenation between NADH and NADP is coupled to respiration and ATP hydrolysis and functions as a proton pump across the membrane. This is NAD(P) transhydrogenase subunit alpha (pntA) from Haemophilus influenzae (strain ATCC 51907 / DSM 11121 / KW20 / Rd).